Reading from the N-terminus, the 1121-residue chain is Anillin (1121 aa).

M1 carries the post-translational modification N-acetylmethionine. Residues 1–25 show a composition bias toward basic and acidic residues; the sequence is MDPFTEKLLERTRARRENLQRKMAE. The required for ubiquitination stretch occupies residues 1–45; sequence MDPFTEKLLERTRARRENLQRKMAERPTAVARSAPHAKRGREPLS. 3 disordered regions span residues 1-113, 125-196, and 212-402; these read MDPF…AAIS, ADRG…PVGR, and DDVS…TKAI. An interaction with CD2AP region spans residues 1–154; sequence MDPFTEKLLE…MQRLAEQRRH (154 aa). A nuclear localization region spans residues 1–228; it reads MDPFTEKLLE…AKQNSVQEQP (228 aa). A phosphoserine mark is found at S73 and S96. Pro residues predominate over residues 96-109; it reads SPMPAPRQAKPPAP. The span at 130–143 shows a compositional bias: polar residues; sequence NSGSEASATSSVKT. Over residues 147-157 the composition is skewed to basic and acidic residues; the sequence is RLAEQRRHWDS. S180 carries the phosphoserine modification. Residue T192 is modified to Phosphothreonine. The segment covering 216–228 has biased composition (polar residues); sequence HSSAKQNSVQEQP. A phosphoserine mark is found at S223, S250, and S259. The tract at residues 229–671 is interaction with F-actin; the sequence is GTACLSKSSS…RDLLYSIDAY (443 aa). The span at 234–250 shows a compositional bias: low complexity; that stretch reads SKSSSASGASASINSSS. The segment covering 282-298 has biased composition (low complexity); that stretch reads SASVSSSVKASSPVTAA. Residues 303-314 show a composition bias toward basic and acidic residues; that stretch reads ENREAQNPELLH. T316 bears the Phosphothreonine mark. Phosphoserine is present on residues S318 and S334. Residue T359 is modified to Phosphothreonine. Residue K366 is modified to N6-acetyllysine. Basic and acidic residues predominate over residues 368 to 384; that stretch reads FLERFGERCQEHSKESP. The span at 391–401 shows a compositional bias: polar residues; that stretch reads KTPNITPNTKA. T392 and T396 each carry phosphothreonine. Residues S414 and S444 each carry the phosphoserine modification. The segment at 490–511 is disordered; that stretch reads NEPAVKLSSTEPAGSTESEMTK. Over residues 496 to 511 the composition is skewed to polar residues; sequence LSSTEPAGSTESEMTK. A phosphoserine mark is found at S513, S548, and S556. Positions 564–599 form a coiled coil; sequence FSDVLEEGELDVEKSQEEMDQVGAENSEEQEDALNI. The segment covering 623-635 has biased composition (polar residues); sequence SPPSELRDSNLSA. Residues 623-656 form a disordered region; it reads SPPSELRDSNLSAASPKPGKFQRTRVPRAESADS. A phosphoserine mark is found at S637, S653, S656, and S659. Y666 is modified (phosphotyrosine). 4 positions are modified to phosphoserine: S673, S683, S787, and S924. The segment at 725–1121 is localization to the cleavage furrow; the sequence is QQTVIYQASQ…DACYKPVGKP (397 aa). The 125-residue stretch at 980–1104 folds into the PH domain; the sequence is AVEEKGFLTI…WMQKLNQVIV (125 aa).

Interacts with F-actin. Interacts with CD2AP. May interact with RHOA. Interacts with FZR1/CDH1 during mitotic exit. In terms of processing, phosphorylated during mitosis. Post-translationally, ubiquitinated, and this requires FZR1/CDH1.

The protein localises to the nucleus. Its subcellular location is the cytoplasm. It is found in the cytoskeleton. The protein resides in the cell cortex. It localises to the cell projection. The protein localises to the bleb. Required for cytokinesis. Essential for the structural integrity of the cleavage furrow and for completion of cleavage furrow ingression. Plays a role in bleb assembly during metaphase and anaphase of mitosis. May play a significant role in podocyte cell migration. The polypeptide is Anillin (Anln) (Mus musculus (Mouse)).